Here is a 194-residue protein sequence, read N- to C-terminus: Fe/S biogenesis protein NfuA (194 aa).

Positions 152 and 155 each coordinate [4Fe-4S] cluster.

It belongs to the NfuA family. As to quaternary structure, homodimer. The cofactor is [4Fe-4S] cluster.

In terms of biological role, involved in iron-sulfur cluster biogenesis. Binds a 4Fe-4S cluster, can transfer this cluster to apoproteins, and thereby intervenes in the maturation of Fe/S proteins. Could also act as a scaffold/chaperone for damaged Fe/S proteins. This is Fe/S biogenesis protein NfuA from Teredinibacter turnerae (strain ATCC 39867 / T7901).